The following is a 137-amino-acid chain: S-protein homolog 16 (137 aa).

The signal sequence occupies residues 1-21; the sequence is MKNLLVFIFVFSLCMFDHVSG. A glycan (N-linked (GlcNAc...) asparagine) is linked at N87.

The protein belongs to the plant self-incompatibility (S1) protein family.

It localises to the secreted. In Arabidopsis thaliana (Mouse-ear cress), this protein is S-protein homolog 16.